We begin with the raw amino-acid sequence, 615 residues long: DNA mismatch repair protein MutL (615 aa).

It belongs to the DNA mismatch repair MutL/HexB family.

Functionally, this protein is involved in the repair of mismatches in DNA. It is required for dam-dependent methyl-directed DNA mismatch repair. May act as a 'molecular matchmaker', a protein that promotes the formation of a stable complex between two or more DNA-binding proteins in an ATP-dependent manner without itself being part of a final effector complex. The sequence is that of DNA mismatch repair protein MutL from Parabacteroides distasonis (strain ATCC 8503 / DSM 20701 / CIP 104284 / JCM 5825 / NCTC 11152).